The following is a 370-amino-acid chain: uncharacterized protein (370 aa).

Asp-152, His-154, Asp-184, Asn-215, His-306, and His-308 together coordinate a divalent metal cation.

Belongs to the metallophosphoesterase superfamily. A divalent metal cation is required as a cofactor.

This is an uncharacterized protein from Helicobacter pylori (strain ATCC 700392 / 26695) (Campylobacter pylori).